The primary structure comprises 272 residues: Magnetosome protein MamQ (272 aa).

The Cytoplasmic portion of the chain corresponds to 1–46 (MAVSDADASSVDKVESITLQRVKQSEELLAQLYVVEESPRRMGRGP). A helical membrane pass occupies residues 47–67 (VQLMLAISVLSLVAFITTLLM). Over 68 to 272 (RYNAFVTMYE…PLTHSQESKN (205 aa)) the chain is Lumenal.

The protein belongs to the LemA family.

It is found in the magnetosome membrane. The protein resides in the cell inner membrane. Essential for magnetosome formation. Not essential for formation of magnetosome membrane vesicles. One of 7 genes (mamLQBIEMO) able to induce magnetosome membrane biogenesis; coexpression of mamLQRBIEMO in a deletion of the 17 gene mamAB operon restores magnetosome vesicle formation but not magnetite biosynthesis. In Magnetospirillum gryphiswaldense (strain DSM 6361 / JCM 21280 / NBRC 15271 / MSR-1), this protein is Magnetosome protein MamQ.